The sequence spans 289 residues: uncharacterized protein (289 aa).

This is an uncharacterized protein from Archaeoglobus fulgidus (strain ATCC 49558 / DSM 4304 / JCM 9628 / NBRC 100126 / VC-16).